The following is a 404-amino-acid chain: Cysteine desulfurase IscS (404 aa).

Residues 75–76 (AT), Asn155, Gln183, and 203–205 (SGH) each bind pyridoxal 5'-phosphate. Lys206 carries the N6-(pyridoxal phosphate)lysine modification. Thr243 lines the pyridoxal 5'-phosphate pocket. Residue Cys328 is the Cysteine persulfide intermediate of the active site. Residue Cys328 coordinates [2Fe-2S] cluster.

This sequence belongs to the class-V pyridoxal-phosphate-dependent aminotransferase family. NifS/IscS subfamily. In terms of assembly, homodimer. Forms a heterotetramer with IscU, interacts with other sulfur acceptors. The cofactor is pyridoxal 5'-phosphate.

It localises to the cytoplasm. It carries out the reaction (sulfur carrier)-H + L-cysteine = (sulfur carrier)-SH + L-alanine. It functions in the pathway cofactor biosynthesis; iron-sulfur cluster biosynthesis. Functionally, master enzyme that delivers sulfur to a number of partners involved in Fe-S cluster assembly, tRNA modification or cofactor biosynthesis. Catalyzes the removal of elemental sulfur atoms from cysteine to produce alanine. Functions as a sulfur delivery protein for Fe-S cluster synthesis onto IscU, an Fe-S scaffold assembly protein, as well as other S acceptor proteins. This Shewanella putrefaciens (strain CN-32 / ATCC BAA-453) protein is Cysteine desulfurase IscS.